The following is a 210-amino-acid chain: Orotate phosphoribosyltransferase (210 aa).

5-phospho-alpha-D-ribose 1-diphosphate is bound by residues R94, K98, H100, and 120–128; that span reads EDLISTGGS. S124 is a binding site for orotate.

This sequence belongs to the purine/pyrimidine phosphoribosyltransferase family. PyrE subfamily. Homodimer. Mg(2+) is required as a cofactor.

It carries out the reaction orotidine 5'-phosphate + diphosphate = orotate + 5-phospho-alpha-D-ribose 1-diphosphate. Its pathway is pyrimidine metabolism; UMP biosynthesis via de novo pathway; UMP from orotate: step 1/2. In terms of biological role, catalyzes the transfer of a ribosyl phosphate group from 5-phosphoribose 1-diphosphate to orotate, leading to the formation of orotidine monophosphate (OMP). The protein is Orotate phosphoribosyltransferase of Bacillus cereus (strain G9842).